The sequence spans 258 residues: Indole-3-glycerol phosphate synthase (258 aa).

This sequence belongs to the TrpC family.

It carries out the reaction 1-(2-carboxyphenylamino)-1-deoxy-D-ribulose 5-phosphate + H(+) = (1S,2R)-1-C-(indol-3-yl)glycerol 3-phosphate + CO2 + H2O. It participates in amino-acid biosynthesis; L-tryptophan biosynthesis; L-tryptophan from chorismate: step 4/5. This Campylobacter fetus subsp. fetus (strain 82-40) protein is Indole-3-glycerol phosphate synthase.